The chain runs to 391 residues: DNA repair protein NreA (391 aa).

The C4-type zinc-finger motif lies at 6–20; the sequence is CAECKGKLLCGRSKC. A PIP motif motif is present at residues 382–389; the sequence is QTSLASFF.

The protein belongs to the Nre family. As to quaternary structure, interacts with the DNA polymerase sliding clamp (PCNA) via the PIP (PCNA-interacting peptide) motif.

Involved in DNA damage repair. This Archaeoglobus fulgidus (strain ATCC 49558 / DSM 4304 / JCM 9628 / NBRC 100126 / VC-16) protein is DNA repair protein NreA.